The sequence spans 367 residues: Chorismate synthase (367 aa).

Arginine 48 contacts NADP(+). Residues arginine 125–serine 127, asparagine 243–alanine 244, glycine 283, lysine 298–serine 302, and arginine 324 each bind FMN.

This sequence belongs to the chorismate synthase family. Homotetramer. FMNH2 serves as cofactor.

It catalyses the reaction 5-O-(1-carboxyvinyl)-3-phosphoshikimate = chorismate + phosphate. It functions in the pathway metabolic intermediate biosynthesis; chorismate biosynthesis; chorismate from D-erythrose 4-phosphate and phosphoenolpyruvate: step 7/7. Functionally, catalyzes the anti-1,4-elimination of the C-3 phosphate and the C-6 proR hydrogen from 5-enolpyruvylshikimate-3-phosphate (EPSP) to yield chorismate, which is the branch point compound that serves as the starting substrate for the three terminal pathways of aromatic amino acid biosynthesis. This reaction introduces a second double bond into the aromatic ring system. The protein is Chorismate synthase of Psychrobacter cryohalolentis (strain ATCC BAA-1226 / DSM 17306 / VKM B-2378 / K5).